The sequence spans 101 residues: Phosphoribosyl-AMP cyclohydrolase (101 aa).

Asp-71 provides a ligand contact to Mg(2+). Cys-72 serves as a coordination point for Zn(2+). The Mg(2+) site is built by Asp-73 and Asp-75. Zn(2+) is bound by residues Cys-88 and Cys-95.

This sequence belongs to the PRA-CH family. In terms of assembly, homodimer. Mg(2+) serves as cofactor. Requires Zn(2+) as cofactor.

The protein resides in the cytoplasm. It catalyses the reaction 1-(5-phospho-beta-D-ribosyl)-5'-AMP + H2O = 1-(5-phospho-beta-D-ribosyl)-5-[(5-phospho-beta-D-ribosylamino)methylideneamino]imidazole-4-carboxamide. It functions in the pathway amino-acid biosynthesis; L-histidine biosynthesis; L-histidine from 5-phospho-alpha-D-ribose 1-diphosphate: step 3/9. Its function is as follows. Catalyzes the hydrolysis of the adenine ring of phosphoribosyl-AMP. The polypeptide is Phosphoribosyl-AMP cyclohydrolase (Bacillus cereus (strain AH820)).